A 443-amino-acid chain; its full sequence is Probable glycine dehydrogenase (decarboxylating) subunit 1 (443 aa).

Belongs to the GcvP family. N-terminal subunit subfamily. As to quaternary structure, the glycine cleavage system is composed of four proteins: P, T, L and H. In this organism, the P 'protein' is a heterodimer of two subunits.

It catalyses the reaction N(6)-[(R)-lipoyl]-L-lysyl-[glycine-cleavage complex H protein] + glycine + H(+) = N(6)-[(R)-S(8)-aminomethyldihydrolipoyl]-L-lysyl-[glycine-cleavage complex H protein] + CO2. Its function is as follows. The glycine cleavage system catalyzes the degradation of glycine. The P protein binds the alpha-amino group of glycine through its pyridoxal phosphate cofactor; CO(2) is released and the remaining methylamine moiety is then transferred to the lipoamide cofactor of the H protein. The chain is Probable glycine dehydrogenase (decarboxylating) subunit 1 from Nitratidesulfovibrio vulgaris (strain ATCC 29579 / DSM 644 / CCUG 34227 / NCIMB 8303 / VKM B-1760 / Hildenborough) (Desulfovibrio vulgaris).